The chain runs to 708 residues: MFNFFAAAPKGFEYALAKELETLGAENVRESVAGVYFSASLAQGYQITLWTRLASRIVLILFTGECQSAEQLYNAAYTIDWPSHFSNRSTFSIDFHGTGGFINNSQFGALKIKDAVVDRFRDDDLSRPDVVKGHPDMRIDAHYGRGKITIGINFSGAALHQRGYRGNTGEAPLKENLAANMLYRSGWADNPVTLLDPFCGSGTVLIEAALMACDIAPGLMRERFGFEHWRRHDQALWQQVIEEAKARASLGKTRCQLKFYGSDIDSRVVALAKRNANSAGVFDFIDFKVANALNLEPPVAEGMVLTNPPYGERLGNVTSLLQLYFQLGEKFKQSYGGWKLGLLCSDMELVSSLKLKADKQMKMYNGALECAFNLYTLHATSTRRDIPVDTTGQGGEIAAPFANRLKKNLKQLEKWAKREGIDSYRLYDADIPEYNVAVDRYLDYVVVQEYAAPSAIPEAVTKRRLTDVLLALPRALGIDPDKIVLKTRERQKGTNQYQKLDGEKLELVTTEYGCSFKLNLTDYLDTGLFLDHRLTRKLVGEKAKNRDVLNLFAYTGSASVHAGKGGAKSVTTVDMSNTYLNWAKDNFMLNGLIGRQYQFEQADCLQWIRDCERQFDLIFIDPPTFSNSKRMEDSFDVQRDHVDLLASLKKLLRPGGEIVFSNNKRKFKMDMEALAAAGLKAVNIDDKVLPMDYARNPQIHNCWVVTHG.

The THUMP domain maps to 43–154 (QGYQITLWTR…RGKITIGINF (112 aa)).

This sequence belongs to the methyltransferase superfamily. RlmKL family.

It is found in the cytoplasm. It carries out the reaction guanosine(2445) in 23S rRNA + S-adenosyl-L-methionine = N(2)-methylguanosine(2445) in 23S rRNA + S-adenosyl-L-homocysteine + H(+). It catalyses the reaction guanosine(2069) in 23S rRNA + S-adenosyl-L-methionine = N(2)-methylguanosine(2069) in 23S rRNA + S-adenosyl-L-homocysteine + H(+). In terms of biological role, specifically methylates the guanine in position 2445 (m2G2445) and the guanine in position 2069 (m7G2069) of 23S rRNA. This Shewanella amazonensis (strain ATCC BAA-1098 / SB2B) protein is Ribosomal RNA large subunit methyltransferase K/L.